A 444-amino-acid polypeptide reads, in one-letter code: N-succinylarginine dihydrolase (444 aa).

Residues 19-28, asparagine 110, and 137-138 contribute to the substrate site; these read AGLSFGNVAS and HR. Glutamate 174 is a catalytic residue. Arginine 214 is a binding site for substrate. The active site involves histidine 250. Substrate-binding residues include aspartate 252 and asparagine 362. Catalysis depends on cysteine 368, which acts as the Nucleophile.

The protein belongs to the succinylarginine dihydrolase family. As to quaternary structure, homodimer.

It carries out the reaction N(2)-succinyl-L-arginine + 2 H2O + 2 H(+) = N(2)-succinyl-L-ornithine + 2 NH4(+) + CO2. Its pathway is amino-acid degradation; L-arginine degradation via AST pathway; L-glutamate and succinate from L-arginine: step 2/5. In terms of biological role, catalyzes the hydrolysis of N(2)-succinylarginine into N(2)-succinylornithine, ammonia and CO(2). The polypeptide is N-succinylarginine dihydrolase (Shewanella sp. (strain ANA-3)).